Here is a 264-residue protein sequence, read N- to C-terminus: Thymidylate synthase (264 aa).

Position 21 (R21) interacts with dUMP. H51 contacts (6R)-5,10-methylene-5,6,7,8-tetrahydrofolate. Residue 126–127 (RR) participates in dUMP binding. C146 functions as the Nucleophile in the catalytic mechanism. DUMP contacts are provided by residues 166 to 169 (RSAD), N177, and 207 to 209 (HLY). D169 lines the (6R)-5,10-methylene-5,6,7,8-tetrahydrofolate pocket. A263 serves as a coordination point for (6R)-5,10-methylene-5,6,7,8-tetrahydrofolate.

Belongs to the thymidylate synthase family. Bacterial-type ThyA subfamily. In terms of assembly, homodimer.

The protein localises to the cytoplasm. The catalysed reaction is dUMP + (6R)-5,10-methylene-5,6,7,8-tetrahydrofolate = 7,8-dihydrofolate + dTMP. Its pathway is pyrimidine metabolism; dTTP biosynthesis. Functionally, catalyzes the reductive methylation of 2'-deoxyuridine-5'-monophosphate (dUMP) to 2'-deoxythymidine-5'-monophosphate (dTMP) while utilizing 5,10-methylenetetrahydrofolate (mTHF) as the methyl donor and reductant in the reaction, yielding dihydrofolate (DHF) as a by-product. This enzymatic reaction provides an intracellular de novo source of dTMP, an essential precursor for DNA biosynthesis. This is Thymidylate synthase from Rhizobium etli (strain ATCC 51251 / DSM 11541 / JCM 21823 / NBRC 15573 / CFN 42).